The sequence spans 291 residues: Protein SpdB (291 aa).

Helical transmembrane passes span 24–44, 71–91, and 99–119; these read VVVIVMWLGEAMPWAVALVVG, ITGVGWGFGAVATGVLVAHAL, and WLAVAWLPLAAKALWLVHGLW.

The protein localises to the cell membrane. Functionally, involved in plasmid transfer. This Streptomyces lividans protein is Protein SpdB (spdB).